The primary structure comprises 452 residues: Putrescine hydroxycinnamoyltransferase (452 aa).

His-151 serves as the catalytic Proton acceptor. The disordered stretch occupies residues 213–234; that stretch reads PAAGVDGDVGGDHKQQHGHGGE. Positions 222-234 are enriched in basic and acidic residues; sequence GGDHKQQHGHGGE. Asp-398 functions as the Proton acceptor in the catalytic mechanism.

The protein belongs to the plant acyltransferase family. In terms of tissue distribution, highly expressed in roots. Expressed at low levels in flowers.

Functionally, hydroxycinnamoyl transferase that catalyzes the transfer of an acyl from p-coumaryol-CoA to putrescine, to produce coumaroyl putrescine. Can use feruloyl-CoA, caffeoyl-CoA and sinapoyl-CoA as acyl donors. Seems to be able to transfer the acyl group from feruloyl-CoA to the acyl acceptors agmatine and spermidine. In Oryza sativa subsp. japonica (Rice), this protein is Putrescine hydroxycinnamoyltransferase.